Consider the following 98-residue polypeptide: Large ribosomal subunit protein uL23 (98 aa).

Belongs to the universal ribosomal protein uL23 family. As to quaternary structure, part of the 50S ribosomal subunit. Contacts protein L29, and trigger factor when it is bound to the ribosome.

In terms of biological role, one of the early assembly proteins it binds 23S rRNA. One of the proteins that surrounds the polypeptide exit tunnel on the outside of the ribosome. Forms the main docking site for trigger factor binding to the ribosome. This Streptococcus sanguinis (strain SK36) protein is Large ribosomal subunit protein uL23.